The following is a 408-amino-acid chain: L,D-transpeptidase 2 (408 aa).

A signal peptide spans Met1 to Ala34. Cys35 is lipidated: N-palmitoyl cysteine. Cys35 is lipidated: S-diacylglycerol cysteine. Ca(2+)-binding residues include Asp232, Glu235, and Gly236. Positions Val253–Val378 constitute a L,D-TPase catalytic domain. Residues Tyr318 and Ser331–Gly332 each bind substrate. The active-site Proton donor/acceptor is His336. Cys354 (nucleophile) is an active-site residue. Asn356 contacts substrate.

As to quaternary structure, monomer.

Its subcellular location is the cell membrane. It participates in cell wall biogenesis; peptidoglycan biosynthesis. Its activity is regulated as follows. Is irreversibly inactivated by the beta-lactams carbapenems via the formation of a covalent adduct resulting from acylation of the catalytic Cys. Functionally, generates 3-&gt;3 cross-links in peptidoglycan, catalyzing the cleavage of the mDap(3)-D-Ala(4) bond of a tetrapeptide donor stem and the formation of a bond between the carbonyl of mDap(3) of the donor stem and the side chain of mDap(3) of the acceptor stem. Is specific for donor substrates containing a stem tetrapeptide since it cannot use pentapeptide stems. Is essential for virulence in a mouse model of acute infection. In Mycobacterium tuberculosis (strain CDC 1551 / Oshkosh), this protein is L,D-transpeptidase 2 (ldtB).